The chain runs to 128 residues: Iron-sulfur cluster insertion protein ErpA (128 aa).

Positions 56, 120, and 122 each coordinate iron-sulfur cluster.

This sequence belongs to the HesB/IscA family. In terms of assembly, homodimer. Requires iron-sulfur cluster as cofactor.

Functionally, required for insertion of 4Fe-4S clusters for at least IspG. This chain is Iron-sulfur cluster insertion protein ErpA, found in Xanthomonas axonopodis pv. citri (strain 306).